We begin with the raw amino-acid sequence, 278 residues long: Bifunctional protein FolD (278 aa).

NADP(+) contacts are provided by residues 164 to 166 and T228; that span reads GRS.

Belongs to the tetrahydrofolate dehydrogenase/cyclohydrolase family. Homodimer.

It carries out the reaction (6R)-5,10-methylene-5,6,7,8-tetrahydrofolate + NADP(+) = (6R)-5,10-methenyltetrahydrofolate + NADPH. The catalysed reaction is (6R)-5,10-methenyltetrahydrofolate + H2O = (6R)-10-formyltetrahydrofolate + H(+). It participates in one-carbon metabolism; tetrahydrofolate interconversion. Catalyzes the oxidation of 5,10-methylenetetrahydrofolate to 5,10-methenyltetrahydrofolate and then the hydrolysis of 5,10-methenyltetrahydrofolate to 10-formyltetrahydrofolate. In Mycoplasmopsis synoviae (strain 53) (Mycoplasma synoviae), this protein is Bifunctional protein FolD.